The chain runs to 136 residues: Selenoprotein M (136 aa).

The first 19 residues, 1-19, serve as a signal peptide directing secretion; it reads MWLPLPLLLGLLQLQPILS. Active-site nucleophile residues include Cys38 and Sec41. Residues 38 to 41 constitute a cross-link (cysteinyl-selenocysteine (Cys-Sec)); it reads CGGU. Sec41 is a non-standard amino acid (selenocysteine). The disordered stretch occupies residues 111–136; the sequence is SSPDAPVPAEFKMAPARASGDTKEDL. The short motif at 133 to 136 is the Prevents secretion from ER element; it reads KEDL.

The protein belongs to the selenoprotein M/F family.

It is found in the endoplasmic reticulum. May function as a thiol-disulfide oxidoreductase that participates in disulfide bond formation. The protein is Selenoprotein M (selenom) of Xenopus laevis (African clawed frog).